We begin with the raw amino-acid sequence, 135 residues long: MSTFHFDLVSPEMVAFSGDVDQVDIPGAEGDFGVLAGHAPVVAVIRPGILTVTAGANKQKIVVLGGIAEVSDKGLTVLADVATPAPDVDLQDFAATIQTMEQQIPGKVGDELDRAIERLDHFKSIQHELNTTAMH.

It belongs to the ATPase epsilon chain family. F-type ATPases have 2 components, CF(1) - the catalytic core - and CF(0) - the membrane proton channel. CF(1) has five subunits: alpha(3), beta(3), gamma(1), delta(1), epsilon(1). CF(0) has three main subunits: a, b and c.

The protein resides in the cell inner membrane. Produces ATP from ADP in the presence of a proton gradient across the membrane. The sequence is that of ATP synthase epsilon chain from Rhodopseudomonas palustris (strain ATCC BAA-98 / CGA009).